Reading from the N-terminus, the 274-residue chain is Cytochrome b-c1 complex subunit Rieske, mitochondrial (274 aa).

Topologically, residues 79–103 are mitochondrial matrix; sequence SHTDVKVPDFYDYRRLEVLDSTKSS. A helical membrane pass occupies residues 104 to 140; that stretch reads RESSEARKGFSYLVTAVTTVGVAYAAKNAVTQFISSM. The Mitochondrial intermembrane segment spans residues 141-274; that stretch reads SASADVLAMA…FTSDDMVVVG (134 aa). The region spanning 187–272 is the Rieske domain; sequence EAAVELSQLR…YEFTSDDMVV (86 aa). The [2Fe-2S] cluster site is built by Cys217, His219, Cys236, His239, and Ser241. Cys222 and Cys238 are oxidised to a cystine.

Belongs to the Rieske iron-sulfur protein family. In terms of assembly, component of the ubiquinol-cytochrome c oxidoreductase (cytochrome b-c1 complex, complex III, CIII), a multisubunit enzyme composed of 11 subunits. The complex is composed of 3 respiratory subunits cytochrome b, cytochrome c1 and Rieske protein UQCRFS1, 2 core protein subunits UQCRC1/QCR1 and UQCRC2/QCR2, and 6 low-molecular weight protein subunits UQCRH/QCR6, UQCRB/QCR7, UQCRQ/QCR8, UQCR10/QCR9, UQCR11/QCR10 and subunit 9, the cleavage product of Rieske protein UQCRFS1. The complex exists as an obligatory dimer and forms supercomplexes (SCs) in the inner mitochondrial membrane with NADH-ubiquinone oxidoreductase (complex I, CI) and cytochrome c oxidase (complex IV, CIV), resulting in different assemblies (supercomplex SCI(1)III(2)IV(1) and megacomplex MCI(2)III(2)IV(2)). Incorporation of the Rieske protein UQCRFS1 is the penultimate step in complex III assembly. Interacts with TTC19, which is involved in the clearance of UQCRFS1 fragments. As to quaternary structure, component of the ubiquinol-cytochrome c oxidoreductase (cytochrome b-c1 complex, complex III, CIII). Subunit 9 corresponds to the mitochondrial targeting sequence (MTS) of Rieske protein UQCRFS1. It is retained after processing and incorporated inside complex III, where it remains bound to the complex and localizes between the 2 core subunits UQCRC1/QCR1 and UQCRC2/QCR2. [2Fe-2S] cluster serves as cofactor. Proteolytic processing is necessary for the correct insertion of UQCRFS1 in the complex III dimer. Several fragments are generated during UQCRFS1 insertion, most probably due to the endogenous matrix-processing peptidase (MPP) activity of the 2 core protein subunits UQCRC1/QCR1 and UQCRC2/QCR2, which are homologous to the 2 mitochondrial-processing peptidase (MPP) subunits beta-MPP and alpha-MPP respectively. The action of the protease is also necessary for the clearance of the UQCRFS1 fragments.

The protein resides in the mitochondrion inner membrane. It carries out the reaction a quinol + 2 Fe(III)-[cytochrome c](out) = a quinone + 2 Fe(II)-[cytochrome c](out) + 2 H(+)(out). Functionally, component of the ubiquinol-cytochrome c oxidoreductase, a multisubunit transmembrane complex that is part of the mitochondrial electron transport chain which drives oxidative phosphorylation. The respiratory chain contains 3 multisubunit complexes succinate dehydrogenase (complex II, CII), ubiquinol-cytochrome c oxidoreductase (cytochrome b-c1 complex, complex III, CIII) and cytochrome c oxidase (complex IV, CIV), that cooperate to transfer electrons derived from NADH and succinate to molecular oxygen, creating an electrochemical gradient over the inner membrane that drives transmembrane transport and the ATP synthase. The cytochrome b-c1 complex catalyzes electron transfer from ubiquinol to cytochrome c, linking this redox reaction to translocation of protons across the mitochondrial inner membrane, with protons being carried across the membrane as hydrogens on the quinol. In the process called Q cycle, 2 protons are consumed from the matrix, 4 protons are released into the intermembrane space and 2 electrons are passed to cytochrome c. The Rieske protein is a catalytic core subunit containing a [2Fe-2S] iron-sulfur cluster. It cycles between 2 conformational states during catalysis to transfer electrons from the quinol bound in the Q(0) site in cytochrome b to cytochrome c1. Incorporation of UQCRFS1 is the penultimate step in complex III assembly. In terms of biological role, component of the ubiquinol-cytochrome c oxidoreductase (cytochrome b-c1 complex, complex III, CIII). UQCRFS1 undergoes proteolytic processing once it is incorporated in the complex III dimer. One of the fragments, called subunit 9, corresponds to its mitochondrial targeting sequence (MTS). The proteolytic processing is necessary for the correct insertion of UQCRFS1 in the complex III dimer, but the persistence of UQCRFS1-derived fragments may prevent newly imported UQCRFS1 to be processed and assembled into complex III and is detrimental for the complex III structure and function. This Theropithecus gelada (Gelada baboon) protein is Cytochrome b-c1 complex subunit Rieske, mitochondrial (UQCRFS1).